A 599-amino-acid chain; its full sequence is Elongation factor 4 (599 aa).

The tr-type G domain occupies 2-184 (KNIRNFSIIA…RLVRDIPPPE (183 aa)). Residues 14 to 19 (DHGKST) and 131 to 134 (NKID) each bind GTP.

It belongs to the TRAFAC class translation factor GTPase superfamily. Classic translation factor GTPase family. LepA subfamily.

It is found in the cell inner membrane. It carries out the reaction GTP + H2O = GDP + phosphate + H(+). Its function is as follows. Required for accurate and efficient protein synthesis under certain stress conditions. May act as a fidelity factor of the translation reaction, by catalyzing a one-codon backward translocation of tRNAs on improperly translocated ribosomes. Back-translocation proceeds from a post-translocation (POST) complex to a pre-translocation (PRE) complex, thus giving elongation factor G a second chance to translocate the tRNAs correctly. Binds to ribosomes in a GTP-dependent manner. This Shigella sonnei (strain Ss046) protein is Elongation factor 4.